Consider the following 409-residue polypeptide: Bone morphogenetic protein 4 (409 aa).

A signal peptide spans 1-24 (MIPGNRMLMVVLLCQVLLGGASHA). A propeptide spanning residues 25–293 (SLIPETGKKK…ALTRRRRAKR (269 aa)) is cleaved from the precursor. At serine 91 the chain carries Phosphoserine. 2 N-linked (GlcNAc...) asparagine glycosylation sites follow: asparagine 144 and asparagine 209. The tract at residues 284–308 (ALTRRRRAKRSPKHHPQRARKKNKN) is disordered. Cystine bridges form between cysteine 309-cysteine 374, cysteine 338-cysteine 406, and cysteine 342-cysteine 408. Asparagine 351 and asparagine 366 each carry an N-linked (GlcNAc...) asparagine glycan.

It belongs to the TGF-beta family. In terms of assembly, homodimer; disulfide-linked. Interacts with GREM2. Part of a complex consisting of TWSG1 and CHRD. Interacts with the serine proteases, HTRA1 and HTRA3; the interaction with either inhibits BMP4-mediated signaling. The HTRA protease activity is required for this inhibition. Interacts with SOSTDC1. Interacts with FBN1 (via N-terminal domain) and FBN2. Interacts with type I receptor BMPR1A. Interacts with type II receptor BMPR2. Interacts with FSTL1; this interaction inhibits the activation of the BMP4/Smad1/5/8 signaling pathway. Interacts with SCUBE3. Interacts with TGFBR3.

Its subcellular location is the secreted. It is found in the extracellular space. It localises to the extracellular matrix. Functionally, growth factor of the TGF-beta superfamily that plays essential roles in many developmental processes, including neurogenesis, vascular development, angiogenesis and osteogenesis. Acts in concert with PTHLH/PTHRP to stimulate ductal outgrowth during embryonic mammary development and to inhibit hair follicle induction. Initiates the canonical BMP signaling cascade by associating with type I receptor BMPR1A and type II receptor BMPR2. Once all three components are bound together in a complex at the cell surface, BMPR2 phosphorylates and activates BMPR1A. In turn, BMPR1A propagates signal by phosphorylating SMAD1/5/8 that travel to the nucleus and act as activators and repressors of transcription of target genes. Positively regulates the expression of odontogenic development regulator MSX1 via inducing the IPO7-mediated import of SMAD1 to the nucleus. Required for MSX1-mediated mesenchymal molar tooth bud development beyond the bud stage, via promoting Wnt signaling. Acts as a positive regulator of odontoblast differentiation during mesenchymal tooth germ formation, expression is repressed during the bell stage by MSX1-mediated inhibition of CTNNB1 signaling. Able to induce its own expression in dental mesenchymal cells and also in the neighboring dental epithelial cells via an MSX1-mediated pathway. Can also signal through non-canonical BMP pathways such as ERK/MAP kinase, PI3K/Akt, or SRC cascades. For example, induces SRC phosphorylation which, in turn, activates VEGFR2, leading to an angiogenic response. The protein is Bone morphogenetic protein 4 of Bos taurus (Bovine).